The following is a 698-amino-acid chain: Dolichyl-diphosphooligosaccharide--protein glycosyltransferase subunit 2 (698 aa).

Residues Met-1–Ala-29 form the signal peptide. At Val-30–Glu-600 the chain is on the lumenal side. Residues Leu-601–Met-621 form a helical membrane-spanning segment. Topologically, residues Arg-622–Ala-638 are cytoplasmic. A helical membrane pass occupies residues Phe-639–Ile-659. Position 660 (Lys-660) is a topological domain, lumenal. Residues Leu-661–Gly-681 traverse the membrane as a helical segment. Topologically, residues His-682–Ala-698 are cytoplasmic.

Belongs to the SWP1 family. As to quaternary structure, component of the oligosaccharyltransferase (OST) complex.

It localises to the endoplasmic reticulum membrane. It participates in protein modification; protein glycosylation. In terms of biological role, subunit of the oligosaccharyl transferase (OST) complex that catalyzes the initial transfer of a defined glycan (Glc(3)Man(9)GlcNAc(2) in eukaryotes) from the lipid carrier dolichol-pyrophosphate to an asparagine residue within an Asn-X-Ser/Thr consensus motif in nascent polypeptide chains, the first step in protein N-glycosylation. N-glycosylation occurs cotranslationally and the complex associates with the Sec61 complex at the channel-forming translocon complex that mediates protein translocation across the endoplasmic reticulum (ER). All subunits are required for a maximal enzyme activity. The chain is Dolichyl-diphosphooligosaccharide--protein glycosyltransferase subunit 2 (RPN2) from Oryza sativa subsp. japonica (Rice).